We begin with the raw amino-acid sequence, 305 residues long: tRNA pseudouridine synthase B (305 aa).

The Nucleophile role is filled by aspartate 41.

This sequence belongs to the pseudouridine synthase TruB family. Type 1 subfamily.

The catalysed reaction is uridine(55) in tRNA = pseudouridine(55) in tRNA. Functionally, responsible for synthesis of pseudouridine from uracil-55 in the psi GC loop of transfer RNAs. The polypeptide is tRNA pseudouridine synthase B (Prochlorococcus marinus (strain MIT 9301)).